The chain runs to 728 residues: Protein Hook homolog 1 (728 aa).

The residue at position 1 (Met1) is an N-acetylmethionine. The tract at residues 1–555 (MEETQPPPQP…LKQKLEAHME (555 aa)) is sufficient for interaction with microtubules. The Calponin-homology (CH) domain occupies 12–128 (LPLCDSLMIW…RLLQLILGCA (117 aa)). Coiled-coil stretches lie at residues 169–434 (PNDA…RCSQ) and 477–658 (LRLQ…AKFR). Residues 169 to 444 (PNDAVGELEQ…VQQDHLNQTD (276 aa)) are sufficient for homodimerization, interaction wit HOOK2, HOOK3 and AP4M1. Ser235 carries the phosphoserine modification. The segment at 481-512 (QEGSENERIEELQEQLEQKHRKMNELETEQRL) is disordered. The span at 503–512 (MNELETEQRL) shows a compositional bias: basic and acidic residues. Residues 657-728 (FRDYEEKLIV…SVKVPATTSD (72 aa)) are sufficient for interaction with AKTIP and VPS18. At Thr699 the chain carries Phosphothreonine. Residues Ser719 and Ser727 each carry the phosphoserine modification.

The protein belongs to the hook family. In terms of assembly, self-associates. Component of the FTS/Hook/FHIP complex (FHF complex), composed of AKTIP/FTS, FHIP1B, and one or more members of the Hook family of proteins HOOK1, HOOK2, and HOOK3. Interacts directly with AKTIP/FTS, HOOK2 and HOOK3. Associates with several subunits of the homotypic vesicular sorting complex (the HOPS complex) including VPS16, VPS18, VPS39 and VPS41; these interactions may be indirect. Interacts with CCDC181. Interacts (via coiled-coil region) with RIMBP3 (via C-terminus). Interacts with LRGUK (via guanylate kinase-like domain). Interacts with microtubules. May interact with CLN3. Interacts with AP4M1; the interaction is direct, mediates the interaction between FTS-Hook-FHIP (FHF) complex and AP-4 and the perinuclear distribution of AP-4.

Its subcellular location is the cytoplasm. The protein localises to the cytoskeleton. Component of the FTS/Hook/FHIP complex (FHF complex). The FHF complex may function to promote vesicle trafficking and/or fusion via the homotypic vesicular protein sorting complex (the HOPS complex). FHF complex promotes the distribution of AP-4 complex to the perinuclear area of the cell. Required for spermatid differentiation. Probably involved in the positioning of the microtubules of the manchette and the flagellum in relation to the membrane skeleton. This Homo sapiens (Human) protein is Protein Hook homolog 1.